Reading from the N-terminus, the 252-residue chain is CLAVATA3/ESR (CLE)-related protein 4A-2 (252 aa).

The first 21 residues, 1 to 21 (MAKNAMLCLLILRVVLALAFA), serve as a signal peptide directing secretion. Residues 21 to 83 (ATNKKGDEEP…SNQLPNNNWM (63 aa)) form a required for secretion from the host cytoplasm to the host apoplasm region. An N-linked (GlcNAc...) asparagine glycan is attached at N32. Residues 116–252 (RKTGMHSQRH…APAGPDPIHH (137 aa)) are disordered. Basic and acidic residues-rich tracts occupy residues 125–137 (HHEETTLEQEKRV), 144–179 (PIHHQDTTLEQEKRAVPAGPDPKHHEETTLEQEKRV), 186–200 (PIHHQDTTLEQEKRA), and 207–242 (PTHHEETTLEQEKRAVPAGPDPKHHEETTFEQEKRG). An A-1 repeat occupies 127 to 135 (EETTLEQEK). The tract at residues 127 to 219 (EETTLEQEKR…HEETTLEQEK (93 aa)) is 6 X approximate repeat A. The stretch at 136-147 (RVAGAGPDPIHH) is one CLE-1 repeat. Residues 136–252 (RVAGAGPDPI…APAGPDPIHH (117 aa)) are 6 X approximate repeat CLE. An A-2 repeat occupies 148 to 156 (QDTTLEQEK). The stretch at 157 to 168 (RAVPAGPDPKHH) is one CLE-2 repeat. The stretch at 169–177 (EETTLEQEK) is one A-3 repeat. The stretch at 178-189 (RVAGAGPDPIHH) is one CLE-3 repeat. One copy of the A-4 repeat lies at 190 to 198 (QDTTLEQEK). The CLE-4 repeat unit spans residues 199 to 210 (RAVPAGPDPTHH). One copy of the A-5 repeat lies at 211–219 (EETTLEQEK). One copy of the CLE-5 repeat lies at 220–231 (RAVPAGPDPKHH). Residues 232–240 (EETTFEQEK) form an A-6 repeat. Residues 241-252 (RGAPAGPDPIHH) form a CLE-6 repeat.

This sequence belongs to the CLV3/ESR signal peptide family. In terms of tissue distribution, highly expressed exclusively within the dorsal esophageal gland cell during syncytium formation in host plants.

Its subcellular location is the secreted. The protein resides in the host cytoplasm. It is found in the host extracellular space. It localises to the extracellular space. The protein localises to the apoplast. Mimics host plant CLE extracellular signal peptides that regulate cell fate. May play a role in the differentiation or division of feeding cells (syncytia) induced in plant roots during infection. This is CLAVATA3/ESR (CLE)-related protein 4A-2 (CLE-4A-2) from Globodera rostochiensis (Golden nematode worm).